Reading from the N-terminus, the 156-residue chain is Small ribosomal subunit protein uS7c (156 aa).

It belongs to the universal ribosomal protein uS7 family. Part of the 30S ribosomal subunit.

The protein localises to the plastid. The protein resides in the chloroplast. In terms of biological role, one of the primary rRNA binding proteins, it binds directly to 16S rRNA where it nucleates assembly of the head domain of the 30S subunit. The protein is Small ribosomal subunit protein uS7c (rps7) of Mesostigma viride (Green alga).